The chain runs to 672 residues: Segment polarity protein dishevelled homolog mig-5 (672 aa).

The DIX domain maps to 9-91 (CSQIKVFYYL…GFYEIFLVST (83 aa)). 3 disordered regions span residues 97–127 (LPRN…ATPY), 150–174 (YTSN…SSLY), and 187–215 (DDDR…ATES). Positions 98–108 (PRNSGTMTRPQ) are enriched in polar residues. Residues 160 to 169 (YDEHTRRTGD) show a composition bias toward basic and acidic residues. Residues 191–202 (RRKKQKKERFRR) are compositionally biased toward basic residues. Positions 226–294 (EIYLPMKNVP…PQAVRSLREA (69 aa)) constitute a PDZ domain. In terms of domain architecture, DEP spans 427–501 (PDSGLAVKNR…TEKCYYVFGD (75 aa)). The segment at 604–672 (KNNHRQVPAP…SNSRTRILRT (69 aa)) is disordered. The span at 660-672 (ENSSNSRTRILRT) shows a compositional bias: polar residues.

This sequence belongs to the DSH family.

The protein resides in the cytoplasm. The protein localises to the cell cortex. Its subcellular location is the cell membrane. It is found in the cell junction. In terms of biological role, plays a role in the signal transduction pathways mediated by multiple Wnt genes. Functions redundantly with other dishevelled family members throughout development. During embryonic and larval development, controls cell migration and/or cell fate specification of hypodermal cells, hypodermal seam cells, vulval precursor cells and, through distal tip cell migration, somatic gonad precursor cells. In early embryos, regulates the orientation of the mitotic spindle of blastomeres and specifically, along with dsh-2, is required for the correct mitotic spindle orientation of the ABar blastomere division plane. Controls the polarity and the asymmetric localization of downstream components of the wnt/beta-catenin asymmetry pathway, and in particular, controls the asymmetric localization of the wnt receptor lin-17/Frizzled in ectodermal blast B cells. May act redundantly with dsh-2 to regulate the expression and nuclear localization of the beta-catenin homolog wrm-2, but alone seems to be required for the polarity of wrm-2 during the asymmetric cell division of hypodermal seam cells. Also, maintains the polarity and migration of QL neuroblasts in larvae. During the embryonic development of touch receptor neurons, may act redundantly with dsh-1, downstream of wnt signaling ligands and the wnt receptor lin-17/Frizzled, to direct the growth of neurites of touch receptor neurons towards the anterior of the body of the worm and towards the PLM touch receptor neuron and other tail neurons. May play a role in the guidance of posterior D-type motor neuron axons along the anteroposterior axis. In Caenorhabditis elegans, this protein is Segment polarity protein dishevelled homolog mig-5.